A 149-amino-acid chain; its full sequence is NPC intracellular cholesterol transporter 2 (149 aa).

The first 19 residues, Met-1–Ala-19, serve as a signal peptide directing secretion. Disulfide bonds link Cys-27-Cys-140, Cys-42-Cys-47, and Cys-93-Cys-99. Residues Asn-58 and Asn-69 are each glycosylated (N-linked (GlcNAc...) asparagine). Lys-116 is modified (N6-acetyllysine).

This sequence belongs to the NPC2 family. In terms of assembly, interacts with NPC1 (via the second lumenal domain) in a cholestrol-dependent manner. Interacts with NUS1/NgBR, the interaction stabilizes NCP2 and regulates cholesterol trafficking. Interacts with DHDDS. Interacts with NEDD4L (via C2 domain). Interacts with NPC1L1. N-glycosylated. In terms of tissue distribution, detected in liver and bile. Detected in epididymis (at protein level). Detected in caput epididymis, corpus epididymis, cauda epididymis and ovary.

The protein resides in the secreted. Its subcellular location is the endoplasmic reticulum. It localises to the lysosome. It catalyses the reaction cholesterol(in) = cholesterol(out). In terms of biological role, intracellular cholesterol transporter which acts in concert with NPC1 and plays an important role in the egress of cholesterol from the lysosomal compartment. Unesterified cholesterol that has been released from LDLs in the lumen of the late endosomes/lysosomes is transferred by NPC2 to the cholesterol-binding pocket in the N-terminal domain of NPC1. May bind and mobilize cholesterol that is associated with membranes. NPC2 binds cholesterol with a 1:1 stoichiometry. Can bind a variety of sterols, including lathosterol, desmosterol and the plant sterols stigmasterol and beta-sitosterol. The secreted form of NCP2 regulates biliary cholesterol secretion via stimulation of ABCG5/ABCG8-mediated cholesterol transport. This is NPC intracellular cholesterol transporter 2 from Mus musculus (Mouse).